Here is a 74-residue protein sequence, read N- to C-terminus: UPF0352 protein MS1910 (74 aa).

This sequence belongs to the UPF0352 family.

This chain is UPF0352 protein MS1910, found in Mannheimia succiniciproducens (strain KCTC 0769BP / MBEL55E).